A 135-amino-acid polypeptide reads, in one-letter code: Ribonuclease P protein component (135 aa).

The protein belongs to the RnpA family. In terms of assembly, consists of a catalytic RNA component (M1 or rnpB) and a protein subunit.

It carries out the reaction Endonucleolytic cleavage of RNA, removing 5'-extranucleotides from tRNA precursor.. Functionally, RNaseP catalyzes the removal of the 5'-leader sequence from pre-tRNA to produce the mature 5'-terminus. It can also cleave other RNA substrates such as 4.5S RNA. The protein component plays an auxiliary but essential role in vivo by binding to the 5'-leader sequence and broadening the substrate specificity of the ribozyme. In Pseudomonas aeruginosa (strain LESB58), this protein is Ribonuclease P protein component.